Consider the following 465-residue polypeptide: 3-isopropylmalate dehydratase large subunit (465 aa).

Positions 346, 406, and 409 each coordinate [4Fe-4S] cluster.

Belongs to the aconitase/IPM isomerase family. LeuC type 1 subfamily. Heterodimer of LeuC and LeuD. The cofactor is [4Fe-4S] cluster.

The catalysed reaction is (2R,3S)-3-isopropylmalate = (2S)-2-isopropylmalate. Its pathway is amino-acid biosynthesis; L-leucine biosynthesis; L-leucine from 3-methyl-2-oxobutanoate: step 2/4. In terms of biological role, catalyzes the isomerization between 2-isopropylmalate and 3-isopropylmalate, via the formation of 2-isopropylmaleate. The polypeptide is 3-isopropylmalate dehydratase large subunit (Leptospira interrogans serogroup Icterohaemorrhagiae serovar copenhageni (strain Fiocruz L1-130)).